The primary structure comprises 230 residues: NADH dehydrogenase [ubiquinone] iron-sulfur protein 8, mitochondrial (230 aa).

Residues 1–42 constitute a mitochondrion transit peptide; sequence MAAILARKSLSALRSRQLVLAGQAWQQGANTSNGTLLGTRTF. 2 4Fe-4S ferredoxin-type domains span residues 122–151 and 161–190; these read RRYP…IEAE and TRYD…EGPN. [4Fe-4S] cluster is bound by residues C131, C134, C137, C141, C170, C173, C176, and C180.

It belongs to the complex I 23 kDa subunit family. Complex I is composed of about 45 different subunits. This is a component of the iron-sulfur (IP) fragment of the enzyme. The cofactor is [4Fe-4S] cluster.

It is found in the mitochondrion. The catalysed reaction is a ubiquinone + NADH + 5 H(+)(in) = a ubiquinol + NAD(+) + 4 H(+)(out). Core subunit of the mitochondrial membrane respiratory chain NADH dehydrogenase (Complex I) that is believed to belong to the minimal assembly required for catalysis. Complex I functions in the transfer of electrons from NADH to the respiratory chain. The immediate electron acceptor for the enzyme is believed to be ubiquinone. May donate electrons to ubiquinone. The polypeptide is NADH dehydrogenase [ubiquinone] iron-sulfur protein 8, mitochondrial (Nicotiana tabacum (Common tobacco)).